The following is a 92-amino-acid chain: Large ribosomal subunit protein eL43 (92 aa).

The segment at 39 to 60 (CQFCGKDAMKRQAVGIWGCKSC) adopts a C4-type zinc-finger fold.

This sequence belongs to the eukaryotic ribosomal protein eL43 family.

The sequence is that of Large ribosomal subunit protein eL43 (RPL37A) from Cryptochiton stelleri (Giant gumboot chiton).